The primary structure comprises 98 residues: Hainantoxin-XVII (98 aa).

A signal peptide spans 1–40; the sequence is MTTVGVSLFRRSPEKITMKIATFLGLSFLLIASYVLICEA. A propeptide spanning residues 41–64 is cleaved from the precursor; the sequence is QHPGFQELLILEENMRDPENSKER. 3 cysteine pairs are disulfide-bonded: Cys66–Cys81, Cys73–Cys85, and Cys80–Cys95.

This sequence belongs to the hainantoxin family. 17 subfamily. In terms of tissue distribution, expressed by the venom gland.

It is found in the secreted. Putative ion channel inhibitor. The sequence is that of Hainantoxin-XVII from Cyriopagopus hainanus (Chinese bird spider).